Consider the following 56-residue polypeptide: Cecropin-A2 (56 aa).

Arg55 is subject to Arginine amide.

It belongs to the cecropin family.

The protein localises to the secreted. Cecropins have lytic and antibacterial activity against several Gram-positive and Gram-negative bacteria. The sequence is that of Cecropin-A2 (CecA2) from Drosophila yakuba (Fruit fly).